The primary structure comprises 212 residues: Large ribosomal subunit protein uL3 (212 aa).

A disordered region spans residues 133-152 (RGSMGHGSKYHRRPGSLGAK).

This sequence belongs to the universal ribosomal protein uL3 family. As to quaternary structure, part of the 50S ribosomal subunit. Forms a cluster with proteins L14 and L19.

In terms of biological role, one of the primary rRNA binding proteins, it binds directly near the 3'-end of the 23S rRNA, where it nucleates assembly of the 50S subunit. The protein is Large ribosomal subunit protein uL3 of Syntrophomonas wolfei subsp. wolfei (strain DSM 2245B / Goettingen).